We begin with the raw amino-acid sequence, 158 residues long: Serglycin (158 aa).

Positions 1 to 27 are cleaved as a signal peptide; that stretch reads MMQKLLKCSRLVLALALILVLESSVQG. A disulfide bridge links cysteine 40 with cysteine 49. O-linked (Xyl...) (glycosaminoglycan) serine glycosylation is found at serine 94 and serine 96. 9 consecutive repeat copies span residues 94–95, 96–97, 98–99, 100–101, 102–103, 104–105, 106–107, 108–109, and 110–111. Residues 94–111 are 9 X 2 AA tandem repeats of [SF]-G; that stretch reads SGSGFGSGSGSGSGSGSG. Residues serine 100, serine 102, serine 104, serine 106, serine 108, and serine 110 are each glycosylated (O-linked (Xyl...) (glycosaminoglycan) serine). The interval 134–158 is disordered; the sequence is RSLDRNLPSDSQDLGQHGLEEDFML.

This sequence belongs to the serglycin family. As to quaternary structure, binds to activated CD44 and to GZMB. O-glycosylated; contains chondroitin sulfate and heparan sulfate.

The protein resides in the cytoplasmic granule. Its subcellular location is the cytolytic granule. It localises to the secreted. The protein localises to the extracellular space. It is found in the golgi apparatus. Plays a role in formation of mast cell secretory granules and mediates storage of various compounds in secretory vesicles. Required for storage of some proteases in both connective tissue and mucosal mast cells and for storage of granzyme B in T-lymphocytes. Plays a role in localizing neutrophil elastase in azurophil granules of neutrophils. Mediates processing of MMP2. Plays a role in cytotoxic cell granule-mediated apoptosis by forming a complex with granzyme B which is delivered to cells by perforin to induce apoptosis. Regulates the secretion of TNF-alpha and may also regulate protease secretion. Inhibits bone mineralization. This is Serglycin (SRGN) from Homo sapiens (Human).